Here is a 660-residue protein sequence, read N- to C-terminus: MQENLRFASSGDDVKIWDASFLTLVDKFNPHTSPHGISSICWSSNNNFLVTASSSGDKIVVSSCKCKPVPLLELAEGQKQTCVDLNSTSMYLASGGLNNTVNIWDLKSKRLHRSLKDHKCEVTCVAYNWNDCYIASGSLSGEIILHSVTTNTSSTPFGHGSKQPIRHIKYSLFRKSLLGSVSDNGVVTLWDVNSQSSYHTFDSTHKAPASGICFSPVNELLFVTIGLDKRIILYDTSSKKLVKTLVADTPLTAVDFMPDGATLAIGSSRGKIYQYDLRMLKSPVKTISAHKTSVQCIAFQYSTSLTKASLSKGSSNKATAVNKRSVPVSSSSGAAQNSGIVREAPSPSIATVLPQPVTTALGKGSGAAQDEAGLARSKSTDIFSKETDAGKSQDFSSFDDTGKNSLGDMFSPIRDDAVVSKGGDESIGKGDGLDFLPQLNSVFPLRKNAGASSSLVLHSSPLNVLMGSSGKEENESHEPSAESKRAYLGKQEPKDAMKQFTKLISSGAEPGILNTCPSSNQARNLEKFEKPEKDIEAQLIHEPSVNGSSTTVPKAASSVTAGVASSLSEKIVDTLGNSRPGAPLTSVQIRFIQNMIQETLDDFREACHRDIVNLQVEMIKQFHIQLNEMHSLLERYSVNEGLVAEIERLREENKRLRAHF.

WD repeat units follow at residues 1–31 (MQEN…FNPH), 32–71 (TSPH…PVPL), 75–114 (AEGQ…LHRS), 117–156 (DHKC…SSTP), 160–200 (GSKQ…SYHT), 204–244 (THKA…LVKT), 246–285 (VADT…SPVK), and 289–332 (AHKT…SSSS). A phosphoserine mark is found at Ser325 and Ser379. Ser397 carries the phosphoserine; by PLK1 modification. Phosphoserine is present on Ser411. Ser426 is modified (phosphoserine; by PLK1). Ser468 is subject to Phosphoserine. Thr550 carries the post-translational modification Phosphothreonine; by CDK1. Ser637 carries the phosphoserine; by PLK1 modification.

As to quaternary structure, interacts with FAM29A. Interacts with HSPA1A and HSPA1B. Interacts with gamma-tubulin in a HSPA1A/B-dependent manner. Post-translationally, during mitosis, prior phosphorylation on Thr-550 by CDK1 promotes subsequent phosphorylation by PLK1 on Ser-397, Ser-426 and Ser-637. Phosphorylated NEDD1 can interact with gamma-tubulin for targeting the gamma-tubulin ring complex (gTuRC) to the centrosome, an important step for spindle formation.

Its subcellular location is the cytoplasm. It is found in the cytoskeleton. The protein resides in the microtubule organizing center. It localises to the centrosome. Functionally, required for mitosis progression. Promotes the nucleation of microtubules from the spindle. May play an important role during the embryonic development and differentiation of the central nervous system. This is Protein NEDD1 (Nedd1) from Mus musculus (Mouse).